Reading from the N-terminus, the 858-residue chain is Respiratory burst oxidase homolog protein D (858 aa).

The segment covering Met-1–Leu-13 has biased composition (basic and acidic residues). Residues Met-1–Asn-27 form a disordered region. Residues Met-1–Arg-318 are Cytoplasmic-facing. EF-hand-like regions lie at residues Thr-134–Ala-144 and Arg-171–Gln-182. EF-hand domains lie at Ser-194–Ala-229 and Gln-238–Gln-273. Ca(2+) contacts are provided by Asp-207, Asp-209, Asp-211, Arg-213, and Glu-218. The helical transmembrane segment at Val-319–Gln-339 threads the bilayer. The Extracellular portion of the chain corresponds to Tyr-340–His-351. A helical transmembrane segment spans residues Cys-352–Leu-372. Residues Lys-357–Ile-514 enclose the Ferric oxidoreductase domain. Residues Pro-373–Asn-397 lie on the Cytoplasmic side of the membrane. Residues Ile-398–Ala-418 form a helical membrane-spanning segment. Residues His-419 to Lys-454 lie on the Extracellular side of the membrane. A helical membrane pass occupies residues Gly-455 to Ala-475. The Cytoplasmic portion of the chain corresponds to Ser-476–Asn-497. The chain crosses the membrane as a helical span at residues Ala-498–Ile-518. The Extracellular portion of the chain corresponds to Glu-519 to Glu-675. Residues Leu-548–Asp-670 form the FAD-binding FR-type domain. A helical transmembrane segment spans residues Val-676–Ile-696. The Cytoplasmic segment spans residues Val-697–Phe-858.

This sequence belongs to the RBOH (TC 5.B.1.3) family. Monomer and homodimer. Post-translationally, phosphorylated by CPK. As to expression, expressed in leaves.

It is found in the membrane. Functionally, calcium-dependent NADPH oxidase that generates superoxide. May be responsible for the oxidative burst in response to pathogen attack in the leaves. This Solanum tuberosum (Potato) protein is Respiratory burst oxidase homolog protein D (RBOHD).